Here is a 636-residue protein sequence, read N- to C-terminus: Chaperone protein HtpG (636 aa).

The interval 1 to 342 (MSGETLEFQA…AHDLSLNISR (342 aa)) is a; substrate-binding. Residues 343-558 (ELLQQDRQIQ…AHDVTPTLEK (216 aa)) are b. Positions 559-636 (MYRAMGHEVP…ILAERLARTL (78 aa)) are c.

It belongs to the heat shock protein 90 family. Homodimer.

It localises to the cytoplasm. Functionally, molecular chaperone. Has ATPase activity. The chain is Chaperone protein HtpG from Salinispora arenicola (strain CNS-205).